The sequence spans 1293 residues: Phosphoribosylformylglycinamidine synthase (1293 aa).

Residues Gly-305–Asp-316 and Ala-676 contribute to the ATP site. Mg(2+) is bound by residues Asp-677, Glu-716, Asn-720, and Asp-884. ATP is bound at residue Ser-886. Residues Met-1040–Gly-1293 enclose the Glutamine amidotransferase type-1 domain. Cys-1133 acts as the Nucleophile in catalysis. Active-site residues include His-1258 and Glu-1260.

It in the N-terminal section; belongs to the FGAMS family. In terms of assembly, monomer.

It localises to the cytoplasm. The enzyme catalyses N(2)-formyl-N(1)-(5-phospho-beta-D-ribosyl)glycinamide + L-glutamine + ATP + H2O = 2-formamido-N(1)-(5-O-phospho-beta-D-ribosyl)acetamidine + L-glutamate + ADP + phosphate + H(+). It functions in the pathway purine metabolism; IMP biosynthesis via de novo pathway; 5-amino-1-(5-phospho-D-ribosyl)imidazole from N(2)-formyl-N(1)-(5-phospho-D-ribosyl)glycinamide: step 1/2. Phosphoribosylformylglycinamidine synthase involved in the purines biosynthetic pathway. Catalyzes the ATP-dependent conversion of formylglycinamide ribonucleotide (FGAR) and glutamine to yield formylglycinamidine ribonucleotide (FGAM) and glutamate. The chain is Phosphoribosylformylglycinamidine synthase from Shewanella denitrificans (strain OS217 / ATCC BAA-1090 / DSM 15013).